Reading from the N-terminus, the 261-residue chain is 3-methyl-2-oxobutanoate hydroxymethyltransferase (261 aa).

Positions 42 and 81 each coordinate Mg(2+). 3-methyl-2-oxobutanoate-binding positions include 42–43 (DS), Asp81, and Lys110. Glu112 contacts Mg(2+). Catalysis depends on Glu179, which acts as the Proton acceptor.

It belongs to the PanB family. In terms of assembly, homodecamer; pentamer of dimers. Mg(2+) is required as a cofactor.

The protein resides in the cytoplasm. The enzyme catalyses 3-methyl-2-oxobutanoate + (6R)-5,10-methylene-5,6,7,8-tetrahydrofolate + H2O = 2-dehydropantoate + (6S)-5,6,7,8-tetrahydrofolate. It participates in cofactor biosynthesis; (R)-pantothenate biosynthesis; (R)-pantoate from 3-methyl-2-oxobutanoate: step 1/2. Functionally, catalyzes the reversible reaction in which hydroxymethyl group from 5,10-methylenetetrahydrofolate is transferred onto alpha-ketoisovalerate to form ketopantoate. This is 3-methyl-2-oxobutanoate hydroxymethyltransferase from Thermus thermophilus (strain ATCC BAA-163 / DSM 7039 / HB27).